The chain runs to 690 residues: Kelch-like protein 8 (690 aa).

The region spanning 111–178 (CDVELLVAGS…IYTDKIAITM (68 aa)) is the BTB domain. One can recognise a BACK domain in the interval 213 to 314 (CMSLYHFSDI…VGWNFLCEAV (102 aa)). 6 Kelch repeats span residues 383 to 430 (AIFC…SANG), 431 to 477 (NLYA…SIEN), 478 to 524 (VIYA…VIGR), 525 to 571 (YLFA…VLDG), 572 to 618 (YLYA…ALGG), and 620 to 665 (VYAI…WANV).

In terms of assembly, component of the BCR(kel-8) E3 ubiquitin ligase complex, at least composed of cul-3, kel-8 and rbx-1. Interacts with rpy-1. In terms of tissue distribution, expressed in neurons.

It localises to the synapse. It participates in protein modification; protein ubiquitination. Substrate-specific adapter of a BCR (BTB-CUL3-RBX1) E3 ubiquitin ligase complex that regulates degradation of glutamate receptors in neurons. The BCR(kel-8) ubiquitin ligase complex mediates ubiquitination and subsequent degradation of rpy-1. Indirectly regulates the protein turnover of glr-1, possibly via ubiquitination and degradation of rpy-1. This Caenorhabditis elegans protein is Kelch-like protein 8 (kel-8).